The sequence spans 485 residues: MEKKSVLILGTASHVGKSSVVTAICRILSREYRVAPFKAQNMSLNSWITKDGKEIGIAQAIQAKAAGTEPTADMNPVLLKPKGDCVSQIILLGEPYADRSAGKYYESIAEMNEVLEGALKRLCNEHDIIVMEGAGGAAEINLYERDIVNIGTARLTQAPIILVGDIERGGVFASLYGTVALLPEDVRKNVKGFIINKFRGDLEILKPGLKQLEEKTGIPVLGVLPYFKLNIPSEDSVSLEDKEAEKNEKEIEIAVIRLPRISNFTDFEPLERSAKIRYVELDEDLGTPDAIMIPGTKNTVNDLLDLKASGMAEKIQAFKGKIPIFGICGGYQMLGKTIYDSGVENGVEAEFEGLGLLDIGTKFGEYKKRTIQVTKKVSAYGPILAPIDGEEIKGYEIHMGITDSCRNIFGNDGAIDKAGLVIGTYLHGLFDNKNIRDALMQYLYEKKGLEYIPENSMTESDAYEELANVVEQNLDMEKFYEIIGI.

The region spanning 250-435 is the GATase cobBQ-type domain; that stretch reads EIEIAVIRLP…LHGLFDNKNI (186 aa). The active-site Nucleophile is cysteine 328. Residue histidine 427 is part of the active site.

Belongs to the CobB/CobQ family. CobQ subfamily.

Its pathway is cofactor biosynthesis; adenosylcobalamin biosynthesis. In terms of biological role, catalyzes amidations at positions B, D, E, and G on adenosylcobyrinic A,C-diamide. NH(2) groups are provided by glutamine, and one molecule of ATP is hydrogenolyzed for each amidation. This Methanosarcina barkeri (strain Fusaro / DSM 804) protein is Probable cobyric acid synthase.